The following is a 116-amino-acid chain: Dolichyl-diphosphooligosaccharide--protein glycosyltransferase subunit DAD1 (116 aa).

At 1–32 the chain is on the cytoplasmic side; the sequence is MAKSSATKDAQALFHSLRSAYAATPTNLKIID. The helical transmembrane segment at 33-53 threads the bilayer; it reads LYVIFAISTALIQVVYMAIVG. Over 54 to 56 the chain is Lumenal; the sequence is SFP. Residues 57–77 form a helical membrane-spanning segment; the sequence is FNSFLSGVLSCIGTAVLAVCL. The Cytoplasmic portion of the chain corresponds to 78–95; sequence RIQVNKENKEFKDLPPER. The helical transmembrane segment at 96 to 116 threads the bilayer; that stretch reads AFADFVLCNLVLHLVIMNFLG.

The protein belongs to the DAD/OST2 family. As to quaternary structure, component of the oligosaccharyltransferase (OST) complex.

Its subcellular location is the endoplasmic reticulum membrane. It functions in the pathway protein modification; protein glycosylation. Its function is as follows. Subunit of the oligosaccharyl transferase (OST) complex that catalyzes the initial transfer of a defined glycan (Glc(3)Man(9)GlcNAc(2) in eukaryotes) from the lipid carrier dolichol-pyrophosphate to an asparagine residue within an Asn-X-Ser/Thr consensus motif in nascent polypeptide chains, the first step in protein N-glycosylation. N-glycosylation occurs cotranslationally and the complex associates with the Sec61 complex at the channel-forming translocon complex that mediates protein translocation across the endoplasmic reticulum (ER). All subunits are required for a maximal enzyme activity. This Solanum lycopersicum (Tomato) protein is Dolichyl-diphosphooligosaccharide--protein glycosyltransferase subunit DAD1 (DAD1).